Consider the following 407-residue polypeptide: Growth/differentiation factor 11 (407 aa).

A signal peptide spans M1–A24. A propeptide spanning residues A25–R298 is cleaved from the precursor. N94 is a glycosylation site (N-linked (GlcNAc...) asparagine). Intrachain disulfides connect C304/C314, C313/C372, C341/C404, and C345/C406.

The protein belongs to the TGF-beta family. In terms of assembly, homodimer; disulfide-linked. Interacts directly with ACVR2B. Interacts directly with ACVR2A. Interacts with ACVR1B, TGFBR1 and ACVR1C in an ACVR2B-dependent manner. Interacts with FST isoform 2/FS-288. In terms of processing, synthesized as large precursor molecule that undergoes proteolytic cleavage by furin-like proteases. This produces an inactive form consisting of the mature C-terminal portion non-covalently bound to its cleaved N-terminal propeptide. Activation of the mature form requires additional cleavage of the propeptide by a tolloid-like metalloproteinase. As to expression, in the embryo, strong expression is seen in the palatal epithelia, including the medial edge epithelial and midline epithelial seam of the palatal shelves. Less pronounced expression is also seen throughout the palatal shelf and tongue mesenchyme.

It localises to the secreted. Its function is as follows. Secreted signal that acts globally to regulate anterior/posterior axial patterning during development. May play critical roles in patterning both mesodermal and neural tissues. It is required for proper vertebral patterning and orofacial development. Signals through activin receptors type-2, ACVR2A and ACVR2B, and activin receptors type-1, ACVR1B, ACVR1C and TGFBR1 leading to the phosphorylation of SMAD2 and SMAD3. The protein is Growth/differentiation factor 11 (GDF11) of Homo sapiens (Human).